A 319-amino-acid chain; its full sequence is Taste receptor type 2 member 30 (319 aa).

Position 1 (M1) is a topological domain, extracellular. The helical transmembrane segment at 2–22 (ITFLPIIFSILIVVIFVVGNF) threads the bilayer. Over 23–46 (ANGFIALVNSIEWVKRQKISFVDQ) the chain is Cytoplasmic. The chain crosses the membrane as a helical span at residues 47–67 (ILTALAVSRVGLLWVLLLHWY). Over 68–86 (ATQLNPAFYSVEVRITVYN) the chain is Extracellular. Residues 87 to 107 (VWAVTNHFSSWLATSLSMFYL) traverse the membrane as a helical segment. Topologically, residues 108–126 (LKIANFSNLIFLRIKRRVK) are cytoplasmic. A helical membrane pass occupies residues 127–147 (SVVLVILLGPLLFLVCHLFVI). Over 148-178 (NMDETIWTKEYEGNMTWKIKLKSAMYHSNMT) the chain is Extracellular. N-linked (GlcNAc...) asparagine glycosylation is found at N161 and N176. Residues 179-199 (LTILANFVPLTLTLISFLLLI) traverse the membrane as a helical segment. The Cytoplasmic portion of the chain corresponds to 200 to 229 (CSLCKHLKKMQLHGKGSQDPSTKVHIKALQ). The helical transmembrane segment at 230 to 250 (TVTSFLLLCAIYFLSMIISVC) threads the bilayer. Residues 251 to 259 (NLGRLQKQP) lie on the Extracellular side of the membrane. Residues 260–280 (VFMFCQAIIFSYPSTHPFILI) form a helical membrane-spanning segment. The Cytoplasmic segment spans residues 281 to 319 (LGNKKLKQIFLSVLWHVRYWVKDRSLRLHRFTRAALCKG).

Belongs to the G-protein coupled receptor T2R family.

It localises to the membrane. Its function is as follows. Receptor that may play a role in the perception of bitterness and is gustducin-linked. May play a role in sensing the chemical composition of the gastrointestinal content. The activity of this receptor may stimulate alpha gustducin, mediate PLC-beta-2 activation and lead to the gating of TRPM5. The protein is Taste receptor type 2 member 30 (TAS2R30) of Pan paniscus (Pygmy chimpanzee).